The following is a 295-amino-acid chain: NAD kinase (295 aa).

The active-site Proton acceptor is the Asp74. NAD(+) contacts are provided by residues 74–75 (DG), 148–149 (ND), His159, Arg176, Asp178, and 189–194 (TAYALS).

Belongs to the NAD kinase family. Requires a divalent metal cation as cofactor.

It localises to the cytoplasm. The enzyme catalyses NAD(+) + ATP = ADP + NADP(+) + H(+). Functionally, involved in the regulation of the intracellular balance of NAD and NADP, and is a key enzyme in the biosynthesis of NADP. Catalyzes specifically the phosphorylation on 2'-hydroxyl of the adenosine moiety of NAD to yield NADP. This is NAD kinase from Legionella pneumophila (strain Paris).